Here is a 160-residue protein sequence, read N- to C-terminus: Protein YpjC (160 aa).

The sequence is that of Protein YpjC (ypjC) from Escherichia coli (strain K12).